The sequence spans 81 residues: Large ribosomal subunit protein bL31B (81 aa).

This sequence belongs to the bacterial ribosomal protein bL31 family. Type B subfamily. As to quaternary structure, part of the 50S ribosomal subunit.

The chain is Large ribosomal subunit protein bL31B from Halalkalibacterium halodurans (strain ATCC BAA-125 / DSM 18197 / FERM 7344 / JCM 9153 / C-125) (Bacillus halodurans).